Consider the following 245-residue polypeptide: tRNA pseudouridine synthase A (245 aa).

Asp-52 acts as the Nucleophile in catalysis. Substrate is bound at residue Tyr-111.

The protein belongs to the tRNA pseudouridine synthase TruA family. In terms of assembly, homodimer.

The catalysed reaction is uridine(38/39/40) in tRNA = pseudouridine(38/39/40) in tRNA. In terms of biological role, formation of pseudouridine at positions 38, 39 and 40 in the anticodon stem and loop of transfer RNAs. This is tRNA pseudouridine synthase A from Rhodopseudomonas palustris (strain HaA2).